A 320-amino-acid chain; its full sequence is ATP-dependent 6-phosphofructokinase (320 aa).

Glycine 12 is a binding site for ATP. ADP contacts are provided by residues 22 to 26 (RGVVR) and 55 to 60 (RYSVSD). Residues 73–74 (RF) and 103–106 (GDGS) contribute to the ATP site. A Mg(2+)-binding site is contributed by aspartate 104. 126 to 128 (TID) lines the substrate pocket. Aspartate 128 functions as the Proton acceptor in the catalytic mechanism. Arginine 155 is an ADP binding site. Substrate contacts are provided by residues arginine 163 and 170–172 (MGR). Residues 186–188 (GCE), lysine 212, and 214–216 (KKH) contribute to the ADP site. Substrate is bound by residues glutamate 223, arginine 244, and 250–253 (HIQR).

The protein belongs to the phosphofructokinase type A (PFKA) family. ATP-dependent PFK group I subfamily. Prokaryotic clade 'B1' sub-subfamily. In terms of assembly, homotetramer. Mg(2+) serves as cofactor.

The protein localises to the cytoplasm. The catalysed reaction is beta-D-fructose 6-phosphate + ATP = beta-D-fructose 1,6-bisphosphate + ADP + H(+). It participates in carbohydrate degradation; glycolysis; D-glyceraldehyde 3-phosphate and glycerone phosphate from D-glucose: step 3/4. Allosterically activated by ADP and other diphosphonucleosides, and allosterically inhibited by phosphoenolpyruvate. Its function is as follows. Catalyzes the phosphorylation of D-fructose 6-phosphate to fructose 1,6-bisphosphate by ATP, the first committing step of glycolysis. The sequence is that of ATP-dependent 6-phosphofructokinase from Enterobacter cloacae.